The primary structure comprises 193 residues: MTDYLLLFVGTVLVNNFVLVKFLGLCPFMGVSKKLETAMGMGLATTFVMTLASICAWLIDTWILIPLNLIYLRTLAFILVIAVVVQFTEMVVRKTSPVLYRLLGIFLPLITTNCAVLGVALLNINLGHNFLQSALYGFSAAVGFSLVMVLFAAIRERLAVANVPAPFRGNAIALITAGLMSLAFMGFSGLVKL.

Transmembrane regions (helical) follow at residues 5–25 (LLLF…FLGL), 39–59 (MGMG…AWLI), 63–83 (ILIP…VIAV), 102–122 (LLGI…VALL), 134–154 (ALYG…FAAI), and 171–191 (AIAL…SGLV).

The protein belongs to the NqrDE/RnfAE family. As to quaternary structure, the complex is composed of six subunits: RsxA, RsxB, RsxC, RsxD, RsxE and RsxG.

The protein localises to the cell inner membrane. In terms of biological role, part of a membrane-bound complex that couples electron transfer with translocation of ions across the membrane. Required to maintain the reduced state of SoxR. This Escherichia fergusonii (strain ATCC 35469 / DSM 13698 / CCUG 18766 / IAM 14443 / JCM 21226 / LMG 7866 / NBRC 102419 / NCTC 12128 / CDC 0568-73) protein is Ion-translocating oxidoreductase complex subunit A.